Here is a 299-residue protein sequence, read N- to C-terminus: Probable lipid kinase YegS (299 aa).

The region spanning 2 to 133 is the DAGKc domain; it reads AEFPASLLIL…IDMAQVNKQT (132 aa). ATP is bound by residues Thr40, 66–72, and Thr95; that span reads GDGTINE. Residues Leu215, Asp218, and Leu220 each coordinate Mg(2+). Catalysis depends on Glu271, which acts as the Proton acceptor.

It belongs to the diacylglycerol/lipid kinase family. YegS lipid kinase subfamily. The cofactor is Mg(2+). Ca(2+) is required as a cofactor.

It is found in the cytoplasm. In terms of biological role, probably phosphorylates lipids; the in vivo substrate is unknown. The chain is Probable lipid kinase YegS from Escherichia coli O6:K15:H31 (strain 536 / UPEC).